The sequence spans 79 residues: Dermaseptin-S8 (79 aa).

The N-terminal stretch at 1 to 22 (MDILKKSLFLVLFLGLVSLSIC) is a signal peptide. A propeptide spanning residues 23 to 45 (EEEKRENEDEEKQEDDEQSEMKR) is cleaved from the precursor. The residue at position 76 (glutamine 76) is a Glutamine amide. The propeptide occupies 78–79 (AQ).

This sequence belongs to the frog skin active peptide (FSAP) family. Dermaseptin subfamily. As to expression, expressed by the skin glands.

It localises to the secreted. Its function is as follows. Potent antimicrobial peptide with activity against bacteria, fungi and protozoa. Probably acts by disturbing membrane functions with its amphipathic structure. The protein is Dermaseptin-S8 of Phyllomedusa sauvagei (Sauvage's leaf frog).